The primary structure comprises 275 residues: Large ribosomal subunit protein uL2 (275 aa).

Positions 28 to 38 (RPYEPLVETKS) are enriched in basic and acidic residues. Disordered regions lie at residues 28–53 (RPYE…TTRH) and 222–275 (GVAM…RSAK). The span at 254-275 (KGHKTRKNKRTDKMIVRRRSAK) shows a compositional bias: basic residues.

It belongs to the universal ribosomal protein uL2 family. Part of the 50S ribosomal subunit. Forms a bridge to the 30S subunit in the 70S ribosome.

Its function is as follows. One of the primary rRNA binding proteins. Required for association of the 30S and 50S subunits to form the 70S ribosome, for tRNA binding and peptide bond formation. It has been suggested to have peptidyltransferase activity; this is somewhat controversial. Makes several contacts with the 16S rRNA in the 70S ribosome. This is Large ribosomal subunit protein uL2 from Marinobacter nauticus (strain ATCC 700491 / DSM 11845 / VT8) (Marinobacter aquaeolei).